Consider the following 130-residue polypeptide: Small ribosomal subunit protein uS9 (130 aa).

It belongs to the universal ribosomal protein uS9 family.

This chain is Small ribosomal subunit protein uS9, found in Stutzerimonas stutzeri (strain A1501) (Pseudomonas stutzeri).